The following is a 195-amino-acid chain: Imidazoleglycerol-phosphate dehydratase (195 aa).

It belongs to the imidazoleglycerol-phosphate dehydratase family.

Its subcellular location is the cytoplasm. The catalysed reaction is D-erythro-1-(imidazol-4-yl)glycerol 3-phosphate = 3-(imidazol-4-yl)-2-oxopropyl phosphate + H2O. It functions in the pathway amino-acid biosynthesis; L-histidine biosynthesis; L-histidine from 5-phospho-alpha-D-ribose 1-diphosphate: step 6/9. The protein is Imidazoleglycerol-phosphate dehydratase of Aminomonas aminovorus.